We begin with the raw amino-acid sequence, 425 residues long: Histidine--tRNA ligase 2 (425 aa).

This sequence belongs to the class-II aminoacyl-tRNA synthetase family. In terms of assembly, homodimer.

Its subcellular location is the cytoplasm. The enzyme catalyses tRNA(His) + L-histidine + ATP = L-histidyl-tRNA(His) + AMP + diphosphate + H(+). The chain is Histidine--tRNA ligase 2 from Shouchella clausii (strain KSM-K16) (Alkalihalobacillus clausii).